The primary structure comprises 298 residues: NADH-cytochrome b5 reductase 1 (298 aa).

A helical transmembrane segment spans residues 14–34; that stretch reads VILAGAYLIDPSALPFVAAGV. In terms of domain architecture, FAD-binding FR-type spans 56-159; that stretch reads KEYRKFKLVD…RGPKGQFSYT (104 aa). Residues 139-154 and 165-197 each bind FAD; these read SELSIGDSINARGPKG and AIGMIAGGTGLTPMLQIIRAIVKNPEDKTQVNF.

This sequence belongs to the flavoprotein pyridine nucleotide cytochrome reductase family. In terms of assembly, monomer. Component of the 2-(3-amino-3-carboxypropyl)histidine synthase complex composed of DPH1, DPH2, DPH3 and a NADH-dependent reductase, predominantly CBR1. It depends on FAD as a cofactor.

Its subcellular location is the mitochondrion outer membrane. It catalyses the reaction 2 Fe(III)-[cytochrome b5] + NADH = 2 Fe(II)-[cytochrome b5] + NAD(+) + H(+). The enzyme catalyses 2 Fe(3+)-[Dph3] + NADH = 2 Fe(2+)-[Dph3] + NAD(+) + H(+). Its pathway is protein modification; peptidyl-diphthamide biosynthesis. NADH-dependent reductase for DPH3 and cytochrome b5. Required for the first step of diphthamide biosynthesis, a post-translational modification of histidine which occurs in elongation factor 2. DPH1 and DPH2 transfer a 3-amino-3-carboxypropyl (ACP) group from S-adenosyl-L-methionine (SAM) to a histidine residue, the reaction is assisted by a reduction system comprising DPH3 and a NADH-dependent reductase, predominantly CBR1. By reducing DPH3, also involved in the formation of the tRNA wobble base modification mcm5s 2U (5-methoxycarbonylmethyl-2-thiouridine), mediated by the elongator complex. The cytochrome b5/NADH cytochrome b5 reductase electron transfer system supports the catalytic activity of several sterol biosynthetic enzymes. The polypeptide is NADH-cytochrome b5 reductase 1 (CBR1) (Mortierella alpina (Oleaginous fungus)).